The primary structure comprises 380 residues: Phospho-N-acetylmuramoyl-pentapeptide-transferase (380 aa).

The next 11 membrane-spanning stretches (helical) occupy residues 26–46 (IVAA…LFIE), 75–95 (MGGA…ADLG), 98–118 (LVWA…WDDW), 135–155 (LVLQ…DWQP), 160–180 (GFPF…PFVP), 183–203 (LFSP…VVAT), 222–242 (IVSS…IAGF), 259–279 (LGVF…YNTY), 283–303 (VFMG…LAVL), 311–331 (AILH…VWSF), and 357–377 (KIIV…LMSL).

It belongs to the glycosyltransferase 4 family. MraY subfamily. Requires Mg(2+) as cofactor.

The protein localises to the cell inner membrane. It catalyses the reaction UDP-N-acetyl-alpha-D-muramoyl-L-alanyl-gamma-D-glutamyl-meso-2,6-diaminopimeloyl-D-alanyl-D-alanine + di-trans,octa-cis-undecaprenyl phosphate = di-trans,octa-cis-undecaprenyl diphospho-N-acetyl-alpha-D-muramoyl-L-alanyl-D-glutamyl-meso-2,6-diaminopimeloyl-D-alanyl-D-alanine + UMP. Its pathway is cell wall biogenesis; peptidoglycan biosynthesis. In terms of biological role, catalyzes the initial step of the lipid cycle reactions in the biosynthesis of the cell wall peptidoglycan: transfers peptidoglycan precursor phospho-MurNAc-pentapeptide from UDP-MurNAc-pentapeptide onto the lipid carrier undecaprenyl phosphate, yielding undecaprenyl-pyrophosphoryl-MurNAc-pentapeptide, known as lipid I. This Anaeromyxobacter sp. (strain Fw109-5) protein is Phospho-N-acetylmuramoyl-pentapeptide-transferase.